The following is a 284-amino-acid chain: 2-dehydro-3-deoxyphosphooctonate aldolase (284 aa).

This sequence belongs to the KdsA family.

Its subcellular location is the cytoplasm. The catalysed reaction is D-arabinose 5-phosphate + phosphoenolpyruvate + H2O = 3-deoxy-alpha-D-manno-2-octulosonate-8-phosphate + phosphate. It functions in the pathway carbohydrate biosynthesis; 3-deoxy-D-manno-octulosonate biosynthesis; 3-deoxy-D-manno-octulosonate from D-ribulose 5-phosphate: step 2/3. It participates in bacterial outer membrane biogenesis; lipopolysaccharide biosynthesis. The sequence is that of 2-dehydro-3-deoxyphosphooctonate aldolase from Yersinia pseudotuberculosis serotype O:1b (strain IP 31758).